A 788-amino-acid chain; its full sequence is uncharacterized protein (788 aa).

The region spanning 485-693 is the Adrift-type SAM-dependent 2'-O-MTase domain; that stretch reads EMITTAWIKL…IYIVLKSYKG (209 aa). Residues Gly521 and Asp604 each coordinate S-adenosyl-L-methionine. The active-site Proton acceptor is the Lys645.

This is an uncharacterized protein from Acanthamoeba polyphaga (Amoeba).